Reading from the N-terminus, the 62-residue chain is Toxin Tb2-II (62 aa).

The 62-residue stretch at 1-62 (KEGYAMDHEG…KVWDYATNKC (62 aa)) folds into the LCN-type CS-alpha/beta domain. Cystine bridges form between Cys-11/Cys-62, Cys-15/Cys-38, Cys-23/Cys-43, and Cys-27/Cys-45.

Belongs to the long (4 C-C) scorpion toxin superfamily. Sodium channel inhibitor family. Beta subfamily. As to expression, expressed by the venom gland.

Its subcellular location is the secreted. In terms of biological role, beta toxins bind voltage-independently at site-4 of sodium channels (Nav) and shift the voltage of activation toward more negative potentials thereby affecting sodium channel activation and promoting spontaneous and repetitive firing. This toxin is active against both mammals and insects. The polypeptide is Toxin Tb2-II (Tityus bahiensis (Brazilian scorpion)).